Consider the following 481-residue polypeptide: ATP synthase subunit beta, chloroplastic (481 aa).

Position 161 to 168 (Gly-161 to Thr-168) interacts with ATP.

Belongs to the ATPase alpha/beta chains family. As to quaternary structure, F-type ATPases have 2 components, CF(1) - the catalytic core - and CF(0) - the membrane proton channel. CF(1) has five subunits: alpha(3), beta(3), gamma(1), delta(1), epsilon(1). CF(0) has four main subunits: a(1), b(1), b'(1) and c(9-12).

Its subcellular location is the plastid. The protein localises to the chloroplast thylakoid membrane. The catalysed reaction is ATP + H2O + 4 H(+)(in) = ADP + phosphate + 5 H(+)(out). Functionally, produces ATP from ADP in the presence of a proton gradient across the membrane. The catalytic sites are hosted primarily by the beta subunits. The chain is ATP synthase subunit beta, chloroplastic from Dictyota dichotoma.